A 696-amino-acid chain; its full sequence is Caprolactamase subunit alpha (696 aa).

It belongs to the HyuA family. In terms of assembly, the caprolactamase is a heterotetramer composed of two alpha subunits (CapA) and two beta subunits (CapB).

With respect to regulation, activity is dependent on the presence of ATP and bicarbonate. The requirement for bicarbonate may be related to allosteric activation through conformational effects, but it is also conceivable that carboxyphosphate is formed and acts as a mediator in caprolactam activation, forming carboxy- or phospholactim. In terms of biological role, component of a caprolactamase involved in the degradation of caprolactam, an industrial compound mainly used in the production of Nylon 6. Catalyzes the ATP-dependent hydrolysis of the caprolactam ring to form 6-aminocaproic acid (6-ACA). The alpha subunit is responsible for ATP-dependent substrate phosphorylation. The enzyme cannot use 5-oxoproline. This chain is Caprolactamase subunit alpha, found in Pseudomonas jessenii.